A 733-amino-acid polypeptide reads, in one-letter code: Protein PAT1 homolog 2 (733 aa).

2 disordered regions span residues 42–75 (LDQE…PEAL) and 337–366 (LHPQ…PDPY). Residues 49–59 (EPVKLEDDHTK) show a composition bias toward basic and acidic residues. The span at 346–356 (SQRQRPQSSSR) shows a compositional bias: low complexity.

It belongs to the PAT1 family. In terms of assembly, interacts with ribonucleoprotein complex components. Interacts with cpeb. As to expression, oocyte-specific protein. Expressed throughout oogenesis but is not detectable in eggs, embryos, nor in adult tissues (at protein level).

Its subcellular location is the cytoplasm. It localises to the nucleus. Functionally, RNA-binding protein that acts as a translational repressor. When overexpressed, able to disperse P-bodies. The polypeptide is Protein PAT1 homolog 2 (patl2) (Xenopus laevis (African clawed frog)).